Reading from the N-terminus, the 331-residue chain is Fructose-1,6-bisphosphatase class 1 (331 aa).

Mg(2+) contacts are provided by Glu-80, Asp-98, Leu-100, and Asp-101. Residues 101–104 and Asn-189 contribute to the substrate site; that span reads DGSS. Glu-261 is a Mg(2+) binding site.

This sequence belongs to the FBPase class 1 family. As to quaternary structure, homotetramer. Mg(2+) is required as a cofactor.

It is found in the cytoplasm. It carries out the reaction beta-D-fructose 1,6-bisphosphate + H2O = beta-D-fructose 6-phosphate + phosphate. It participates in carbohydrate biosynthesis; gluconeogenesis. The chain is Fructose-1,6-bisphosphatase class 1 from Rhodobacter capsulatus (strain ATCC BAA-309 / NBRC 16581 / SB1003).